The primary structure comprises 1221 residues: DNA topoisomerase 2 (1221 aa).

ATP is bound by residues asparagine 65, asparagine 94, serine 122 to asparagine 124, glycine 135 to lysine 142, and glutamine 352 to lysine 354. The Toprim domain maps to arginine 432–isoleucine 546. Mg(2+) contacts are provided by glutamate 438, aspartate 515, and aspartate 517. The Topo IIA-type catalytic domain occupies leucine 681–leucine 1097. The O-(5'-phospho-DNA)-tyrosine intermediate role is filled by tyrosine 771. The interaction with DNA stretch occupies residues glycine 952–glycine 961. The interval valine 1158 to glycine 1198 is disordered. The segment covering glycine 1165 to threonine 1177 has biased composition (gly residues).

Belongs to the type II topoisomerase family. Homodimer. It depends on Mg(2+) as a cofactor. Requires Mn(2+) as cofactor. Ca(2+) serves as cofactor.

The protein localises to the nucleus. It carries out the reaction ATP-dependent breakage, passage and rejoining of double-stranded DNA.. Control of topological states of DNA by transient breakage and subsequent rejoining of DNA strands. Topoisomerase II makes double-strand breaks. This Trypanosoma brucei brucei protein is DNA topoisomerase 2 (TOP2).